Here is a 315-residue protein sequence, read N- to C-terminus: MPDMKLFAGNATPELAQRIANRLYTSLGDAAVGRFSDGEVSVQINENVRGGDIFIIQSTCAPTNDNLMELVVMVDALRRASAGRITAVIPYFGYARQDRRVRSARVPITAKVVADFLSSVGVDRVLTVDLHAEQIQGFFDVPVDNVFGSPILLEDMLQLNLDNPIVVSPDIGGVVRARAIAKLLNDTDMAIIDKRRPRANVSQVMHIIGDVAGRDCVLVDDMIDTGGTLCKAAEALKERGAKRVFAYATHPIFSGNAANNLRNSVIDEVVVCDTIPLTDEIKALPNVRTLTLSGMLAEAIRRISNEESISAMFEH.

ATP-binding positions include 37 to 39 and 96 to 97; these read DGE and RQ. The Mg(2+) site is built by histidine 131 and aspartate 170. Lysine 194 is an active-site residue. Residues arginine 196, aspartate 220, and 224-228 each bind D-ribose 5-phosphate; that span reads DTGGT.

It belongs to the ribose-phosphate pyrophosphokinase family. Class I subfamily. As to quaternary structure, homohexamer. Requires Mg(2+) as cofactor.

It localises to the cytoplasm. It carries out the reaction D-ribose 5-phosphate + ATP = 5-phospho-alpha-D-ribose 1-diphosphate + AMP + H(+). It functions in the pathway metabolic intermediate biosynthesis; 5-phospho-alpha-D-ribose 1-diphosphate biosynthesis; 5-phospho-alpha-D-ribose 1-diphosphate from D-ribose 5-phosphate (route I): step 1/1. Involved in the biosynthesis of the central metabolite phospho-alpha-D-ribosyl-1-pyrophosphate (PRPP) via the transfer of pyrophosphoryl group from ATP to 1-hydroxyl of ribose-5-phosphate (Rib-5-P). The polypeptide is Ribose-phosphate pyrophosphokinase (Salmonella typhi).